Consider the following 133-residue polypeptide: MIDKIKKGYSLRELADYLDESDAIPKRGYKWHIASILVILKNPVLYGGFRWAGEILEGAFEGYISKKEFEQLQKMLHDRQNFKRRETSSIFIFQAKILCPNCGSRLTCERSIYFRKKDNKNVESNHYRCQHAP.

Positions 1–82 form a DNA-binding region, recombinase; that stretch reads MIDKIKKGYS…QKMLHDRQNF (82 aa).

This is an uncharacterized protein from Bacillus phage phi105 (Bacteriophage phi-105).